The primary structure comprises 614 residues: Vitamin B12 transporter BtuB (614 aa).

The N-terminal stretch at M1–A20 is a signal peptide. The TonB box signature appears at D26–N33. One can recognise a TBDR plug domain in the interval P38–T152. Cyanocob(III)alamin contacts are provided by residues S85, N92, and V110–S111. Residues N155–F614 form the TBDR beta-barrel domain. Beta stranded transmembrane passes span T158–G165, Y169–Q178, and T184–T195. The Ca(2+) site is built by D199, Q211, D213, and D215. The next 2 beta stranded transmembrane spans lie at F217–E227 and D232–D248. The Ca(2+) site is built by Y249 and D250. A cyanocob(III)alamin-binding site is contributed by A251. D261 is a binding site for Ca(2+). A run of 14 beta stranded transmembrane segments spans residues R263–N277, E279–N296, T309–V325, H328–W337, Y353–G369, F371–D381, F385–I400, Y403–N417, K434–E443, V449–N458, Y473–F490, P494–A509, R517–W529, and D535–D550. A cyanocob(III)alamin-binding site is contributed by T309. R517 contributes to the cyanocob(III)alamin binding site. Position 551 (Y551) interacts with cyanocob(III)alamin. The next 3 membrane-spanning stretches (beta stranded) occupy residues T558–A572, I585–V596, and A602–F614. Residues Y597–F614 carry the TonB C-terminal box motif.

This sequence belongs to the TonB-dependent receptor family. BtuB (TC 1.B.14.3.1) subfamily.

It is found in the cell outer membrane. Its function is as follows. Involved in the active translocation of vitamin B12 (cyanocobalamin) across the outer membrane to the periplasmic space. It derives its energy for transport by interacting with the trans-periplasmic membrane protein TonB. The protein is Vitamin B12 transporter BtuB of Salmonella typhimurium (strain LT2 / SGSC1412 / ATCC 700720).